Consider the following 484-residue polypeptide: UDP-N-acetylmuramoyl-L-alanyl-D-glutamate--2,6-diaminopimelate ligase (484 aa).

S30 contributes to the UDP-N-acetyl-alpha-D-muramoyl-L-alanyl-D-glutamate binding site. 109–115 (GTNGKTS) is an ATP binding site. UDP-N-acetyl-alpha-D-muramoyl-L-alanyl-D-glutamate is bound by residues 151–152 (TT), S178, and R186. K218 is subject to N6-carboxylysine. Residues R379, 403 to 406 (DNPR), G455, and E459 contribute to the meso-2,6-diaminopimelate site. A Meso-diaminopimelate recognition motif motif is present at residues 403-406 (DNPR).

This sequence belongs to the MurCDEF family. MurE subfamily. It depends on Mg(2+) as a cofactor. Carboxylation is probably crucial for Mg(2+) binding and, consequently, for the gamma-phosphate positioning of ATP.

It is found in the cytoplasm. It catalyses the reaction UDP-N-acetyl-alpha-D-muramoyl-L-alanyl-D-glutamate + meso-2,6-diaminopimelate + ATP = UDP-N-acetyl-alpha-D-muramoyl-L-alanyl-gamma-D-glutamyl-meso-2,6-diaminopimelate + ADP + phosphate + H(+). Its pathway is cell wall biogenesis; peptidoglycan biosynthesis. Functionally, catalyzes the addition of meso-diaminopimelic acid to the nucleotide precursor UDP-N-acetylmuramoyl-L-alanyl-D-glutamate (UMAG) in the biosynthesis of bacterial cell-wall peptidoglycan. The polypeptide is UDP-N-acetylmuramoyl-L-alanyl-D-glutamate--2,6-diaminopimelate ligase (Clostridioides difficile (strain 630) (Peptoclostridium difficile)).